A 1088-amino-acid chain; its full sequence is RNA-directed RNA polymerase (1088 aa).

In terms of domain architecture, RdRp catalytic spans leucine 501–isoleucine 687.

This sequence belongs to the reoviridae RNA-directed RNA polymerase family. Interacts with VP3 (Potential). Interacts with VP2; this interaction activates VP1. Interacts with NSP5; this interaction is probably necessary for the formation of functional virus factories. Interacts with NSP2; this interaction is weak. The cofactor is Mg(2+).

The protein resides in the virion. The enzyme catalyses RNA(n) + a ribonucleoside 5'-triphosphate = RNA(n+1) + diphosphate. Its function is as follows. RNA-directed RNA polymerase that is involved in both transcription and genome replication. Together with VP3 capping enzyme, forms an enzyme complex positioned near the channels situated at each of the five-fold vertices of the core. Following infection, the outermost layer of the virus is lost, leaving a double-layered particle (DLP) made up of the core and VP6 shell. VP1 then catalyzes the transcription of fully conservative plus-strand genomic RNAs that are extruded through the DLP's channels into the cytoplasm where they function as mRNAs for translation of viral proteins. One copy of each of the viral (+)RNAs is also recruited during core assembly, together with newly synthesized polymerase complexes and VP2. The polymerase of these novo-formed particles catalyzes the synthesis of complementary minus-strands leading to dsRNA formation. To do so, the polymerase specifically recognizes and binds 4 bases 5'-UGUG-3' in the conserved 3'-sequence of plus-strand RNA templates. VP2 presumably activates the autoinhibited VP1-RNA complex to coordinate packaging and genome replication. Once dsRNA synthesis is complete, the polymerase switches to the transcriptional mode, thus providing secondary transcription. The protein is RNA-directed RNA polymerase of Rotavirus A (isolate RVA/Human/United States/WI61/1983/G9P1A[8]) (RV-A).